The primary structure comprises 267 residues: Heme-containing CO-sensing transcriptional regulator RcoM 1 (267 aa).

The 72-residue stretch at 15–86 (RAETFQHKLE…KSRDKLRFLL (72 aa)) folds into the PAS domain. H74 and M104 together coordinate heme. One can recognise an HTH LytTR-type domain in the interval 161–266 (IPVYRKNRVI…TAQLKELLGV (106 aa)).

Heme is required as a cofactor.

It localises to the cytoplasm. One-component, b-type heme-containing aerobic sensor and transcriptional regulator that responds to CO by activating the expression of the oxidation operon cox. In Paraburkholderia xenovorans (strain LB400), this protein is Heme-containing CO-sensing transcriptional regulator RcoM 1 (rcoM1).